The sequence spans 254 residues: Activity-regulated cytoskeleton associated protein 1 (254 aa).

The protein belongs to the ARC/ARG3.1 family. Homooligomer; homooligomerizes into virion-like capsids. Expressed in a specific population of brain neurons, named E347, that are necessary and sufficient for proper body fat storage.

Its subcellular location is the extracellular vesicle membrane. The protein resides in the synapse. In terms of biological role, master regulator of synaptic plasticity that self-assembles into virion-like capsids that encapsulate RNAs and mediate intercellular RNA transfer from motorneurons to muscles. Arc1 protein is released from motorneurons in extracellular vesicles that mediate the transfer of Arc1 mRNA into muscle cells, where Arc1 mRNA can undergo activity-dependent translation. Intercellular transfer od Arc1 mRNA is required for synaptic plasticity at the neuromuscular junction. May play a role in energy balance: required for regulation of body fat by a specific population of brain neurons, named E347, that are necessary and sufficient for proper body fat storage. This is Activity-regulated cytoskeleton associated protein 1 from Drosophila melanogaster (Fruit fly).